Here is a 182-residue protein sequence, read N- to C-terminus: Adenine phosphoribosyltransferase 4 (182 aa).

This sequence belongs to the purine/pyrimidine phosphoribosyltransferase family. Homodimer.

The protein localises to the cytoplasm. It carries out the reaction AMP + diphosphate = 5-phospho-alpha-D-ribose 1-diphosphate + adenine. It participates in purine metabolism; AMP biosynthesis via salvage pathway; AMP from adenine: step 1/1. In terms of biological role, catalyzes a salvage reaction resulting in the formation of AMP, that is energically less costly than de novo synthesis. May contribute to the recycling of adenine into adenylate nucleotides and the inactivation of cytokinins by phosphoribosylation. Possesses low activity toward adenine, but can efficiently convert cytokinins from free bases (active form) to the corresponding nucleotides (inactive form). The polypeptide is Adenine phosphoribosyltransferase 4 (APT4) (Arabidopsis thaliana (Mouse-ear cress)).